The chain runs to 88 residues: Defensin-like protein 98 (88 aa).

The first 29 residues, 1–29 (MGSLRVSTVVIAVVACLSILLISPTEVDG), serve as a signal peptide directing secretion. Cystine bridges form between C33/C76, C40/C62, C46/C73, and C50/C75.

Belongs to the DEFL family.

The protein localises to the secreted. The chain is Defensin-like protein 98 from Arabidopsis thaliana (Mouse-ear cress).